Consider the following 110-residue polypeptide: Protein YcgL (110 aa).

The region spanning 14 to 98 (MFCVIYRSSK…PPEDLLKQHL (85 aa)) is the YcgL domain. The tract at residues 87–110 (PPPPEDLLKQHLSSVGQNTSSADR) is disordered. The segment covering 97-110 (HLSSVGQNTSSADR) has biased composition (polar residues).

The chain is Protein YcgL from Salmonella newport (strain SL254).